Consider the following 331-residue polypeptide: GTPase Obg (331 aa).

In terms of domain architecture, Obg spans 1–159 (MHFIDEVKIY…MWIHLRLKLL (159 aa)). The OBG-type G domain occupies 160–327 (SDVGLIGLPN…IVKLALEIIK (168 aa)). GTP contacts are provided by residues 166–173 (GLPNAGKS), 191–195 (FTTLV), 212–215 (DIPG), 279–282 (NKCD), and 308–310 (STY). Mg(2+) is bound by residues S173 and T193.

This sequence belongs to the TRAFAC class OBG-HflX-like GTPase superfamily. OBG GTPase family. As to quaternary structure, monomer. It depends on Mg(2+) as a cofactor.

It is found in the cytoplasm. Functionally, an essential GTPase which binds GTP, GDP and possibly (p)ppGpp with moderate affinity, with high nucleotide exchange rates and a fairly low GTP hydrolysis rate. Plays a role in control of the cell cycle, stress response, ribosome biogenesis and in those bacteria that undergo differentiation, in morphogenesis control. The sequence is that of GTPase Obg from Rickettsia prowazekii (strain Madrid E).